Consider the following 350-residue polypeptide: 8-amino-7-oxononanoate synthase (350 aa).

77–78 (GY) provides a ligand contact to pyridoxal 5'-phosphate. Residue His102 participates in substrate binding. Pyridoxal 5'-phosphate-binding positions include Ser150, 175-178 (DDAH), and 204-207 (TLSK). Lys207 is subject to N6-(pyridoxal phosphate)lysine. Thr316 lines the substrate pocket.

Belongs to the class-II pyridoxal-phosphate-dependent aminotransferase family. BioF subfamily. As to quaternary structure, homodimer. Pyridoxal 5'-phosphate serves as cofactor.

It carries out the reaction 6-carboxyhexanoyl-[ACP] + L-alanine + H(+) = (8S)-8-amino-7-oxononanoate + holo-[ACP] + CO2. The protein operates within cofactor biosynthesis; biotin biosynthesis. Catalyzes the decarboxylative condensation of pimeloyl-[acyl-carrier protein] and L-alanine to produce 8-amino-7-oxononanoate (AON), [acyl-carrier protein], and carbon dioxide. In Methylocella silvestris (strain DSM 15510 / CIP 108128 / LMG 27833 / NCIMB 13906 / BL2), this protein is 8-amino-7-oxononanoate synthase.